We begin with the raw amino-acid sequence, 901 residues long: Probable inorganic carbon transporter subunit DabA (901 aa).

Cys-424, Asp-426, His-606, and Cys-621 together coordinate Zn(2+).

It belongs to the inorganic carbon transporter (TC 9.A.2) DabA family. In terms of assembly, forms a complex with DabB. Requires Zn(2+) as cofactor.

It localises to the cell membrane. In terms of biological role, part of an energy-coupled inorganic carbon pump. In Staphylococcus aureus (strain USA300), this protein is Probable inorganic carbon transporter subunit DabA.